Consider the following 1170-residue polypeptide: Cellulose synthase-like protein D2 (1170 aa).

Disordered stretches follow at residues 1 to 48, 54 to 73, and 269 to 295; these read MASS…RRTH, SYSR…MSPE, and NEVD…EFTS. A compositionally biased stretch (low complexity) spans 10–24; sequence RHSNSSRLSRMSYSG. Gly residues predominate over residues 273 to 288; that stretch reads NGGGGGGGGGLGGGDG. Transmembrane regions (helical) follow at residues 311-331 and 341-361; these read VLSP…LFLA and AMWL…SWLL. Aspartate 441 is a catalytic residue. Positions 527–551 form a coiled coil; it reads HAREEIKAMKRQREAALDDVVEAVK. The active site involves aspartate 873. 6 consecutive transmembrane segments (helical) span residues 955–975, 981–1001, 1027–1047, 1070–1090, 1104–1124, and 1134–1154; these read IFLI…QFIV, TFLT…VLEI, LAAV…SFTL, SLMI…AVGF, LLGG…FAKG, and TIVF…WVAI.

The protein belongs to the glycosyltransferase 2 family. Plant cellulose synthase-like D subfamily.

It localises to the golgi apparatus membrane. In terms of biological role, thought to be a Golgi-localized beta-glycan synthase that polymerize the backbones of noncellulosic polysaccharides (hemicelluloses) of plant cell wall. This Oryza sativa subsp. japonica (Rice) protein is Cellulose synthase-like protein D2 (CSLD2).